A 136-amino-acid polypeptide reads, in one-letter code: Large ribosomal subunit protein eL27A (136 aa).

This sequence belongs to the eukaryotic ribosomal protein eL27 family. As to quaternary structure, component of the large ribosomal subunit (LSU). Mature yeast ribosomes consist of a small (40S) and a large (60S) subunit. The 40S small subunit contains 1 molecule of ribosomal RNA (18S rRNA) and at least 33 different proteins. The large 60S subunit contains 3 rRNA molecules (25S, 5.8S and 5S rRNA) and at least 46 different proteins.

The protein resides in the cytoplasm. Its subcellular location is the nucleus. In terms of biological role, component of the ribosome, a large ribonucleoprotein complex responsible for the synthesis of proteins in the cell. The small ribosomal subunit (SSU) binds messenger RNAs (mRNAs) and translates the encoded message by selecting cognate aminoacyl-transfer RNA (tRNA) molecules. The large subunit (LSU) contains the ribosomal catalytic site termed the peptidyl transferase center (PTC), which catalyzes the formation of peptide bonds, thereby polymerizing the amino acids delivered by tRNAs into a polypeptide chain. The nascent polypeptides leave the ribosome through a tunnel in the LSU and interact with protein factors that function in enzymatic processing, targeting, and the membrane insertion of nascent chains at the exit of the ribosomal tunnel. The polypeptide is Large ribosomal subunit protein eL27A (rpl2701) (Schizosaccharomyces pombe (strain 972 / ATCC 24843) (Fission yeast)).